Consider the following 94-residue polypeptide: Small ribosomal subunit protein uS19 (94 aa).

The protein belongs to the universal ribosomal protein uS19 family.

In terms of biological role, protein S19 forms a complex with S13 that binds strongly to the 16S ribosomal RNA. This is Small ribosomal subunit protein uS19 from Clostridium botulinum (strain Hall / ATCC 3502 / NCTC 13319 / Type A).